The following is a 127-amino-acid chain: Fluoride-specific ion channel FluC (127 aa).

4 helical membrane-spanning segments follow: residues 2 to 22 (LSSLLAVFIGGGMGSVLRWAI), 35 to 55 (LGTLAVNLLGGFIIGLAIAIF), 68 to 88 (LITTGFCGGLTTFSTFSLEVV), and 104 to 124 (LLNLAGSLVMTLLAFMLVVWI). Residues Gly75 and Thr78 each coordinate Na(+).

The protein belongs to the fluoride channel Fluc/FEX (TC 1.A.43) family.

It is found in the cell inner membrane. It catalyses the reaction fluoride(in) = fluoride(out). With respect to regulation, na(+) is not transported, but it plays an essential structural role and its presence is essential for fluoride channel function. Fluoride-specific ion channel. Important for reducing fluoride concentration in the cell, thus reducing its toxicity. This is Fluoride-specific ion channel FluC from Serratia proteamaculans (strain 568).